A 525-amino-acid polypeptide reads, in one-letter code: GMP synthase [glutamine-hydrolyzing] (525 aa).

The Glutamine amidotransferase type-1 domain occupies 9 to 207; it reads RILILDFGSQ…ILDICECEAL (199 aa). C86 functions as the Nucleophile in the catalytic mechanism. Active-site residues include H181 and E183. One can recognise a GMPS ATP-PPase domain in the interval 208–400; sequence WTPSKIAEDA…LGLPYDMVYR (193 aa). 235–241 lines the ATP pocket; that stretch reads SGGVDSS.

Homodimer.

The catalysed reaction is XMP + L-glutamine + ATP + H2O = GMP + L-glutamate + AMP + diphosphate + 2 H(+). The protein operates within purine metabolism; GMP biosynthesis; GMP from XMP (L-Gln route): step 1/1. Catalyzes the synthesis of GMP from XMP. This chain is GMP synthase [glutamine-hydrolyzing], found in Pseudomonas fluorescens (strain SBW25).